The chain runs to 1074 residues: Probable arabinosyltransferase C (1074 aa).

10 consecutive transmembrane segments (helical) span residues 15–37 (ARLV…PLLP), 214–236 (LLKL…ALHV), 251–273 (SRWW…WHFV), 415–437 (IIIG…ALLV), 452–474 (RFGY…FLIF), 516–538 (SVAR…AMTL), 573–595 (THQF…VAVT), 608–630 (FGAA…WYVS), 645–667 (FGFT…WFHF), and 684–706 (LLVA…SLTL).

It belongs to the emb family.

It localises to the cell membrane. Arabinosyl transferase responsible for the polymerization of arabinose into the arabinan of arabinogalactan. The chain is Probable arabinosyltransferase C (embC) from Mycolicibacterium smegmatis (Mycobacterium smegmatis).